A 263-amino-acid chain; its full sequence is Lens fiber major intrinsic protein (263 aa).

The Cytoplasmic portion of the chain corresponds to 1–9 (MWEFRSFSF). The chain crosses the membrane as a helical span at residues 10 to 29 (WRAVFAEFFGTMFYVFFGLG). The Extracellular segment spans residues 30–41 (ASLKWAAGPANV). The chain crosses the membrane as a helical span at residues 42–59 (LVIALAFGLVLATMVQSI). Residues 60–61 (GH) are Cytoplasmic-facing. The discontinuously helical intramembrane region spans 62–77 (VSGAHINPAVTFAFLI). Positions 68-70 (NPA) match the NPA 1 motif. Residues 78 to 82 (GSQMS) lie on the Cytoplasmic side of the membrane. The helical transmembrane segment at 83 to 106 (LFRAIFYIAAQLLGAVAGAAVLYG) threads the bilayer. The Extracellular segment spans residues 107-127 (VTPAAIRGNLALNTLHPGVSL). The helical transmembrane segment at 128–148 (GQATTVEIFLTLQFVLCIFAT) threads the bilayer. The Cytoplasmic portion of the chain corresponds to 149 to 156 (YDERRNGR). A helical transmembrane segment spans residues 157-175 (LGSVSLAIGFSLTLGHLFG). At 176–178 (LYY) the chain is on the extracellular side. The segment at residues 179–193 (TGASMNPARSFAPAV) is an intramembrane region (discontinuously helical). Positions 184–186 (NPA) match the NPA 2 motif. The Extracellular portion of the chain corresponds to 194-200 (LTRNFTN). A helical transmembrane segment spans residues 201–222 (HWVYWVGPIIGGALGGLVYDFI). The Cytoplasmic portion of the chain corresponds to 223–263 (LFPRMRGLSERLSILKGARPAEPEGQQEATGEPIELKTQSL). Positions 227–237 (MRGLSERLSIL) are interaction with CALM. Positions 241–263 (RPAEPEGQQEATGEPIELKTQSL) are disordered.

The protein belongs to the MIP/aquaporin (TC 1.A.8) family. In terms of assembly, homotetramer; each monomer provides an independent water pore. Two homotetramers on opposing membranes can dimerize, forming a cell-cell junction. Interacts with CALM; the calcium-calmodulin/CALM complex interacts with the cytoplasmic domains of two aquaporins, leading to channel closure.

The protein resides in the cell membrane. The protein localises to the cell junction. It carries out the reaction H2O(in) = H2O(out). Its activity is regulated as follows. The water channel activity is inhibited by calcium through calmodulin/CALM. In terms of biological role, aquaporins form homotetrameric transmembrane channels, with each monomer independently mediating water transport across the plasma membrane along its osmotic gradient. Specifically expressed in lens fiber cells, this aquaporin is crucial for maintaining lens water homeostasis and transparency. Beyond water permeability, it also acts as a cell-to-cell adhesion molecule, forming thin junctions between lens fiber cells that are essential for maintaining the ordered structure and transparency of the lens. In Lithobates pipiens (Northern leopard frog), this protein is Lens fiber major intrinsic protein.